Consider the following 943-residue polypeptide: MTSKSVNSFGAHDTLKVGEKSYQIYRLDAVPNTAKLPYSLKVLAENLLRNEDGSNITKDHIEAIANWDPKAEPSIEIQYTPARVVMQDFTGVPCIVDLATMREAIADLGGNPDKVNPLAPADLVIDHSVIADLFGRADAFERNVEIEYQRNGERYQFLRWGQGAFDDFKVVPPGTGIVHQVNIEYLASVVMTRDGVAYPDTCVGTDSHTTMVNGLGVLGWGVGGIEAEAAMLGQPVSMLIPRVVGFRLTGEIQPGVTATDVVLTVTEMLRQHGVVGKFVEFYGEGVAEVPLANRATLGNMSPEFGSTAAIFPIDEETIKYLRFTGRTPEQVALVEAYAKAQGMWHDPKHEPEFSEYLELNLSDVVPSIAGPKRPQDRIALAQAKSTFREQIYHYVGNGSPDSPHDPHSKLDEVVEETFPASDPGQLTFANDDVATDETVHSAAAHADGRVSNPVRVKSDELGEFVLDHGAVVIAAITSCTNTSNPEVMLGAALLARNAVEKGLTSKPWVKTTIAPGSQVVNDYYDRSGLWPYLEKLGFYLVGYGCTTCIGNSGPLPEEISKAVNDNDLSVTAVLSGNRNFEGRINPDVKMNYLASPPLVIAYALAGTMDFDFQTQPLGQDKDGKNVFLRDIWPSQQDVSDTIAAAINQEMFTRNYADVFKGDDRWRNLPTPSGNTFEWDPNSTYVRKPPYFEGMTAKPEPVGNISGARVLALLGDSVTTDHISPAGAIKPGTPAARYLDEHGVDRKDYNSFGSRRGNHEVMIRGTFANIRLRNQLLDDVSGGYTRDFTQPGGPQAFIYDAAQNYAAQHIPLVVFGGKEYGSGSSRDWAAKGTLLLGVRAVIAESFERIHRSNLIGMGVIPLQFPEGKSASSLGLDGTEVFDITGIDVLNDGKTPKTVCVQATKGDGATIEFDAVVRIDTPGEADYYRNGGILQYVLRNILKSG.

[4Fe-4S] cluster contacts are provided by Cys479, Cys545, and Cys548.

It belongs to the aconitase/IPM isomerase family. Monomer. Requires [4Fe-4S] cluster as cofactor.

The catalysed reaction is citrate = D-threo-isocitrate. It catalyses the reaction (2S,3R)-3-hydroxybutane-1,2,3-tricarboxylate = 2-methyl-cis-aconitate + H2O. It participates in carbohydrate metabolism; tricarboxylic acid cycle; isocitrate from oxaloacetate: step 2/2. The protein operates within organic acid metabolism; propanoate degradation. Involved in the catabolism of short chain fatty acids (SCFA) via the tricarboxylic acid (TCA)(acetyl degradation route) and probably via the 2-methylcitrate cycle I (propionate degradation route). Catalyzes the reversible isomerization of citrate to isocitrate via cis-aconitate. The apo form of AcnA functions as a RNA-binding regulatory protein which binds to selected IRE-like sequences present within the UTRs (untranslated regions) of 3' trxC and 5' IdeR mRNA. Could catalyze the hydration of 2-methyl-cis-aconitate to yield (2R,3S)-2-methylisocitrate. This Mycobacterium tuberculosis (strain ATCC 25618 / H37Rv) protein is Aconitate hydratase A (acn).